The chain runs to 351 residues: Phosphate acyltransferase (351 aa).

Belongs to the PlsX family. Homodimer. Probably interacts with PlsY.

It localises to the cytoplasm. The catalysed reaction is a fatty acyl-[ACP] + phosphate = an acyl phosphate + holo-[ACP]. The protein operates within lipid metabolism; phospholipid metabolism. Its function is as follows. Catalyzes the reversible formation of acyl-phosphate (acyl-PO(4)) from acyl-[acyl-carrier-protein] (acyl-ACP). This enzyme utilizes acyl-ACP as fatty acyl donor, but not acyl-CoA. The polypeptide is Phosphate acyltransferase (Maricaulis maris (strain MCS10) (Caulobacter maris)).